Here is a 240-residue protein sequence, read N- to C-terminus: Probable peptide export permease protein YydJ (240 aa).

6 consecutive transmembrane segments (helical) span residues 13 to 33, 50 to 70, 97 to 117, 126 to 146, 153 to 173, and 210 to 230; these read VIIILGAMFVFLFLLGYFLLV, SYTVATQFGLMLFSFVIAFFI, IAVLFLECFAFITLGLLIISL, ALLLFLFSAVILQYILIIGTI, ILISIGVSIVYWMTSVILVAI, and VLFIILYLVSIIIINAIVLRF.

As to quaternary structure, the complex is composed of 2 ATP-binding proteins (YydI), two transmembrane proteins (YydJ).

Its subcellular location is the cell membrane. Its function is as follows. Suggested to be part of an ABC transporter complex YydIJ involved in export of the modified peptide YydF. This is Probable peptide export permease protein YydJ (yydJ) from Bacillus subtilis (strain 168).